We begin with the raw amino-acid sequence, 509 residues long: Leucine-rich repeat-containing protein 14 (509 aa).

The LRR 1; degenerate repeat unit spans residues 111–146 (RQRLRLLDMTGMQEEGLEQNPDTMSLWSRTVTLAKA). One copy of the LRR 2; degenerate repeat lies at 210–234 (RLQCRDFRAEELSLRSTAGLLELLN). An LRR 3; degenerate repeat occupies 235–262 (PGSVRQIDLRFNNLGLSGLNVLLPHMAK). The LRR 4; degenerate repeat unit spans residues 263 to 298 (FSHLQSLKLPYSNVDVRRLSPVMEEGLQSFASQLGQ). LRR repeat units lie at residues 299 to 323 (LGAL…LGGL), 324 to 355 (QRPL…SSLR), 356 to 374 (KLDL…PFLH), 380 to 407 (SGHL…ILCR), and 408 to 432 (CSWL…VLQN).

This sequence belongs to the PRAME family. LRRC14 subfamily.

It is found in the cytoplasm. The sequence is that of Leucine-rich repeat-containing protein 14 from Xenopus laevis (African clawed frog).